We begin with the raw amino-acid sequence, 140 residues long: Putative nickel-responsive regulator (140 aa).

The Ni(2+) site is built by His-81, His-92, His-94, and Cys-100.

Belongs to the transcriptional regulatory CopG/NikR family. Ni(2+) is required as a cofactor.

In terms of biological role, transcriptional regulator. The chain is Putative nickel-responsive regulator from Methanococcoides burtonii (strain DSM 6242 / NBRC 107633 / OCM 468 / ACE-M).